The primary structure comprises 141 residues: HTH-type transcriptional regulator MntR (141 aa).

The region spanning 1 to 63 is the HTH dtxR-type domain; that stretch reads MPTPSMEDYI…YEKYRGLVLT (63 aa). Residues Asp8, Glu11, His77, Glu99, Glu102, and His103 each coordinate Mn(2+).

The protein belongs to the DtxR/MntR family. In terms of assembly, homodimer.

The protein localises to the cytoplasm. DNA binding is strongly activated by Mn(2+). Functionally, central regulator of manganese homeostasis. In Geobacillus thermodenitrificans (strain NG80-2), this protein is HTH-type transcriptional regulator MntR.